A 144-amino-acid polypeptide reads, in one-letter code: NADH dehydrogenase [ubiquinone] 1 alpha subcomplex subunit 13 (144 aa).

A2 carries the post-translational modification N-acetylalanine. A helical transmembrane segment spans residues 30-51 (LSGYSMLAIGIGTLIYGHWSIM).

Belongs to the complex I NDUFA13 subunit family. Complex I is composed of 45 different subunits. Interacts with CARD15, but not with CARD4. Interacts with STAT3, but not with STAT1, STAT2 and STAT5A. Interacts with OLFM4.

Its subcellular location is the mitochondrion inner membrane. The protein localises to the nucleus. Functionally, accessory subunit of the mitochondrial membrane respiratory chain NADH dehydrogenase (Complex I), that is believed not to be involved in catalysis. Complex I functions in the transfer of electrons from NADH to the respiratory chain. The immediate electron acceptor for the enzyme is believed to be ubiquinone. Involved in the interferon/all-trans-retinoic acid (IFN/RA) induced cell death. This apoptotic activity is inhibited by interaction with viral IRF1. Prevents the transactivation of STAT3 target genes. May play a role in CARD15-mediated innate mucosal responses and serve to regulate intestinal epithelial cell responses to microbes. The polypeptide is NADH dehydrogenase [ubiquinone] 1 alpha subcomplex subunit 13 (NDUFA13) (Pan troglodytes (Chimpanzee)).